We begin with the raw amino-acid sequence, 507 residues long: Pyruvate kinase (507 aa).

Arg-50 lines the substrate pocket. K(+) contacts are provided by Asn-52, Ser-54, Asp-84, and Thr-85. 52–55 (NFSH) provides a ligand contact to ATP. Arg-91 and Lys-177 together coordinate ATP. Residue Glu-242 participates in Mg(2+) binding. Residues Gly-265, Asp-266, and Thr-298 each coordinate substrate. Residue Asp-266 participates in Mg(2+) binding.

The protein belongs to the pyruvate kinase family. Homotetramer. The cofactor is Mg(2+). K(+) serves as cofactor.

It catalyses the reaction pyruvate + ATP = phosphoenolpyruvate + ADP + H(+). It participates in carbohydrate degradation; glycolysis; pyruvate from D-glyceraldehyde 3-phosphate: step 5/5. The protein is Pyruvate kinase (pyk) of Dictyostelium discoideum (Social amoeba).